The chain runs to 205 residues: Max-like protein homolog 2 (205 aa).

Composition is skewed to low complexity over residues 1–12 (MSRSRSAAASSS) and 26–40 (SASS…ATNS). The disordered stretch occupies residues 1 to 58 (MSRSRSAAASSSQKPDDMDLMSPDGSASSPSAPNTPATNSGGFSSDRKKATHLRCERQ). A compositionally biased stretch (basic and acidic residues) spans 45 to 58 (SDRKKATHLRCERQ). The segment at 47–60 (RKKATHLRCERQRR) is basic motif. The region spanning 47–101 (RKKATHLRCERQRREAINSGYSDLKDLIPQTTTSLGCKTTNAAILFRACDFMSQL) is the bHLH domain. The interval 61–101 (EAINSGYSDLKDLIPQTTTSLGCKTTNAAILFRACDFMSQL) is helix-loop-helix motif. Residues 98-132 (MSQLKTDISDADKQLAQLNAQAAALEMIASEYEQM) adopt a coiled-coil conformation.

Widely expressed.

It is found in the nucleus. The protein resides in the cytoplasm. Its subcellular location is the mitochondrion. Functionally, transcription factor. Binds to the E box motif 5'-CACGTG-3', probably in a heterodimeric complex with mml-1. Involved in modulating longevity in response to TOR signaling, dietary restriction, the decline in protein homeostasis associated with normal aging, germline signaling and the insulin-like signaling pathway. Plays a role in autophagy. Involved in regulating migration of the ray 1 precursor cells in the male tail, acting in concert with Wnt and semaphorin signaling pathways. Regulates transcription of genes encoding extracellular matrix (ECM) components which may contribute to the substratum required for migration of the neighboring ray 1 precursor cells. Required for resistance to oxidative stress. Involved in promoting infection by the microsporidian pathogen N.parisii, probably acting independently of its canonical partner, mml-1. The polypeptide is Max-like protein homolog 2 (Caenorhabditis elegans).